We begin with the raw amino-acid sequence, 579 residues long: Probable cholinesterase (579 aa).

The N-terminal stretch at 1–19 is a signal peptide; sequence MTDHKIIMLLLLGIYCIQA. N-linked (GlcNAc...) asparagine; by host glycosylation is found at asparagine 77 and asparagine 144. Serine 217 functions as the Acyl-ester intermediate in the catalytic mechanism. Asparagine 257, asparagine 269, and asparagine 283 each carry an N-linked (GlcNAc...) asparagine; by host glycan. The active-site Charge relay system is the glutamate 337. 2 N-linked (GlcNAc...) asparagine; by host glycosylation sites follow: asparagine 373 and asparagine 394. Residue histidine 451 is the Charge relay system of the active site. Asparagine 469 carries an N-linked (GlcNAc...) asparagine; by host glycan.

It belongs to the type-B carboxylesterase/lipase family.

The enzyme catalyses an acylcholine + H2O = a carboxylate + choline + H(+). Functionally, may be involved in the disruption of the host membrane. This Acanthamoeba polyphaga mimivirus (APMV) protein is Probable cholinesterase.